A 600-amino-acid chain; its full sequence is Aspartate--tRNA(Asp/Asn) ligase (600 aa).

Glu174 is a binding site for L-aspartate. The tract at residues 198 to 201 (QLFK) is aspartate. Residue Arg220 coordinates L-aspartate. ATP-binding positions include 220–222 (RDE) and Gln229. An L-aspartate-binding site is contributed by His457. Residue Glu491 participates in ATP binding. Arg498 lines the L-aspartate pocket. 543-546 (GLDR) is a binding site for ATP.

It belongs to the class-II aminoacyl-tRNA synthetase family. Type 1 subfamily. As to quaternary structure, homodimer.

Its subcellular location is the cytoplasm. It carries out the reaction tRNA(Asx) + L-aspartate + ATP = L-aspartyl-tRNA(Asx) + AMP + diphosphate. Aspartyl-tRNA synthetase with relaxed tRNA specificity since it is able to aspartylate not only its cognate tRNA(Asp) but also tRNA(Asn). Reaction proceeds in two steps: L-aspartate is first activated by ATP to form Asp-AMP and then transferred to the acceptor end of tRNA(Asp/Asn). This Burkholderia vietnamiensis (strain G4 / LMG 22486) (Burkholderia cepacia (strain R1808)) protein is Aspartate--tRNA(Asp/Asn) ligase.